The sequence spans 119 residues: Beta-2-microglobulin (119 aa).

An N-terminal signal peptide occupies residues Met-1–Ala-20. One can recognise an Ig-like C1-type domain in the interval Pro-25–Lys-114. Cysteines 45 and 100 form a disulfide.

Belongs to the beta-2-microglobulin family. As to quaternary structure, heterodimer of an alpha chain and a beta chain. Beta-2-microglobulin is the beta-chain of major histocompatibility complex class I molecules.

The protein resides in the secreted. Its function is as follows. Component of the class I major histocompatibility complex (MHC). Involved in the presentation of peptide antigens to the immune system. In Cebus albifrons (White-fronted capuchin), this protein is Beta-2-microglobulin (B2M).